A 452-amino-acid chain; its full sequence is GPI mannosyltransferase 2 (452 aa).

The Cytoplasmic portion of the chain corresponds to 1-7; it reads MMEKVTK. The chain crosses the membrane as a helical span at residues 8-28; that stretch reads LALTSRVMVLVVQLLANFATP. At 29–113 the chain is on the lumenal side; that stretch reads DHKPDVFRMP…HLGIPLSRDA (85 aa). The helical transmembrane segment at 114–134 threads the bilayer; the sequence is LILLVAVALNVLIFCKTANVL. The Cytoplasmic portion of the chain corresponds to 135–161; the sequence is YKLTQRMFNDHNKSWNAALIFCFNPAS. A helical transmembrane segment spans residues 162–182; the sequence is IFFSAAYSETFFAFASFSLML. Residues 183 to 209 lie on the Lumenal side of the membrane; the sequence is ECMRSEKDFRTFRLGAALTGCFVCRSN. A helical transmembrane segment spans residues 210-230; it reads GLLTLGFPLYFLARHILLSTG. Residues 231–238 are Cytoplasmic-facing; that stretch reads SVQRCWQL. Residues 239–259 traverse the membrane as a helical segment; the sequence is FKMGLAMLVALGILHTYYFYI. Residues 260 to 284 lie on the Lumenal side of the membrane; sequence YRLYCLPDVKVQHAQHVVDYAKERS. Residues 285–305 traverse the membrane as a helical segment; it reads FLISGQASVGSPWCGYTLPFP. The Cytoplasmic portion of the chain corresponds to 306–327; the sequence is YTYVQSHYWDVGFLRYYKWKQL. Residues 328–348 form a helical membrane-spanning segment; that stretch reads PNFLLALPMLLFMHWHCYDYI. Residues 349–370 lie on the Lumenal side of the membrane; it reads RKLVANTWSKISPSEYQGILKE. A helical transmembrane segment spans residues 371–391; the sequence is HISFPFVLHAAVLTLVCTLYV. Topologically, residues 392–398 are cytoplasmic; it reads HIQVSTR. Residues 399 to 419 traverse the membrane as a helical segment; sequence LLASATPVFYWFAADYMPNTF. The Lumenal segment spans residues 420–426; sequence QLSFRSK. A helical transmembrane segment spans residues 427 to 447; the sequence is AGVLFIWCLTYSLVGTVLFSN. The Cytoplasmic segment spans residues 448-452; it reads NYPWT.

It belongs to the PIGV family.

The protein resides in the endoplasmic reticulum membrane. The protein operates within glycolipid biosynthesis; glycosylphosphatidylinositol-anchor biosynthesis. Mannosyltransferase involved in glycosylphosphatidylinositol-anchor biosynthesis. Transfers the second mannose to the glycosylphosphatidylinositol during GPI precursor assembly. Required for the GPI-mediated endoplasmic reticulum exit and proper targeting to the cell surface of chp. Required for GPI-mediated membrane attachment of chp, qsm and Cont. Essential for microvillar stability in the rhabdomere. The polypeptide is GPI mannosyltransferase 2 (Drosophila pseudoobscura pseudoobscura (Fruit fly)).